The primary structure comprises 396 residues: Protein NDRG1-B (396 aa).

The interval 326–396 is disordered; sequence RSRTGSAASS…NTPKSMEVSC (71 aa). Residues 327–340 are compositionally biased toward low complexity; sequence SRTGSAASSSSQDG. 4 consecutive repeat copies span residues 340–349, 350–359, 360–369, and 370–379. Residues 340–379 form a 4 X 10 AA tandem repeats of G-[NS]-R-S-R-[AS]-[HQ]-T-[DGN]-[DET] region; that stretch reads GNRSRSHTNEGSRSRSQTGDGNRSRAHTGDGNRSRSHTDT. Residues 366–377 are compositionally biased toward basic and acidic residues; the sequence is HTGDGNRSRSHT. Residues 378–390 are compositionally biased toward polar residues; the sequence is DTNNVNSDHNTPK.

This sequence belongs to the NDRG family.

May be involved in pronephros development, after specification of the pronephros. The polypeptide is Protein NDRG1-B (ndrg1-b) (Xenopus laevis (African clawed frog)).